We begin with the raw amino-acid sequence, 174 residues long: Anthrone oxygenase CPUR_05435 (174 aa).

4 helical membrane-spanning segments follow: residues 13–33 (VALASGVFLSGAMFSVSAIMI), 56–76 (YGSVLMPSMSVAIAAVYGFAS), 88–108 (CLAAGALTLAIAPYTWLAMIP), and 140–160 (WVVLHSIRSILPLAGAIMGFT).

The protein belongs to the anthrone oxygenase family.

The protein localises to the membrane. It carries out the reaction emodin anthrone + O2 = emodin + H2O + H(+). Its function is as follows. Anthrone oxygenase; part of the ergochrome gene cluster responsible for the typical purple-black color of the ergot sclerotia. The ergochrome gene cluster produces several ergot pigments including the yellow ergochrome secalonic acid and its derivatives, as well as the red anthraquinones endocrocin and clavorubin. The pathway begins with the synthesis of atrochrysone thioester by the polyketide synthase (PKS) CPUR_05437. The atrochrysone carboxyl ACP thioesterase CPUR_05436 then breaks the thioester bond and releases the atrochrysone carboxylic acid from CPUR_05437. The decarboxylase CPUR_05434 then catalyzes the concerted decarboxylation-elimination required to convert atochrysone carboxylic acid into emodin anthrone, which is further oxidized to emodin by the anthrone oxygenase CPUR_05435. Emodin is further modified to yield monodictyphenone via several steps involving CPUR_05427, CPUR_05428, CPUR_05429 and CPUR_05430. The short chain dehydrogenase/reductase CPUR_05418 then catalyzes the C-5 ketoreduction to give the xanthone skeleton of the monomeric units. Ergochromes formation requires further dimerization steps of different xanthone units, probably catalyzed by the cytochrome P450 monooxygenase CPUR_05419. CPUR_05425, CPUR_05426 and CPUR_05431 are unique to Claviceps, thus it is likely that they are involved in further modification of xanthone units or in their dimerization. The yellow ergochromes and the red anthraquinone pigments endocrocin and clavorubin are products from the same PKS derived precursors and the latter are likely shunt products in the pathway of xanthone biosynthesis. It is proposed that atrochrysone carboxylic acid released from the PKS CPUR_05437 can also be converted to endocrocin anthrone which is further oxidized into endocrocin by CPUR_05435. Endocrocin could be then modified to clavorubin, possibly by CPUR_05423 and CPUR_05431. Clavorubin is the principal anthraquinone metabolite produced by the cluster with a much higher yield compared to endocrocin. In Claviceps purpurea (strain 20.1) (Ergot fungus), this protein is Anthrone oxygenase CPUR_05435.